Here is a 791-residue protein sequence, read N- to C-terminus: uncharacterized protein (791 aa).

The chain crosses the membrane as a helical span at residues 10–30 (LLTITIGAVAVSSILLGGIFY). Over residues 56 to 76 (NLDYQKARPSIKDNNLKEIPK) the composition is skewed to basic and acidic residues. Positions 56 to 175 (NLDYQKARPS…PQPQQIPNQS (120 aa)) are disordered. Residues 77–97 (PKPQPKPEPQPTPFPDPIPTP) show a composition bias toward pro residues. Residues 98 to 124 (PKKEELKKPEIKPEEPKKPEIKPEPIP) are compositionally biased toward basic and acidic residues. The span at 125-139 (KPKPQPIPQPTPPVE) shows a compositional bias: pro residues.

The protein to U.parvum UU044.

The protein localises to the membrane. This is an uncharacterized protein from Ureaplasma parvum serovar 3 (strain ATCC 700970).